Here is a 110-residue protein sequence, read N- to C-terminus: Guanine nucleotide-binding protein subunit gamma (110 aa).

A lipid anchor (S-palmitoyl cysteine) is attached at C106. A Cysteine methyl ester modification is found at C107. C107 carries the S-farnesyl cysteine lipid modification. Residues 108–110 constitute a propeptide, removed in mature form; sequence TLM.

It belongs to the G protein gamma family. As to quaternary structure, g proteins are composed of 3 units, alpha, beta and gamma. The beta-gamma subunit complex (STE4-STE18 complex) interacts with PLP1 and PLP2.

The protein localises to the membrane. Implicated in the pheromone A- and alpha-factor response pathway. The beta and gamma chains of the putative yeast mating response pathway G protein play a positive role in initiation of the mating response. The chain is Guanine nucleotide-binding protein subunit gamma (STE18) from Saccharomyces cerevisiae (strain ATCC 204508 / S288c) (Baker's yeast).